Consider the following 302-residue polypeptide: Glycine--tRNA ligase alpha subunit (302 aa).

The protein belongs to the class-II aminoacyl-tRNA synthetase family. In terms of assembly, tetramer of two alpha and two beta subunits.

It is found in the cytoplasm. It carries out the reaction tRNA(Gly) + glycine + ATP = glycyl-tRNA(Gly) + AMP + diphosphate. In Haemophilus influenzae (strain 86-028NP), this protein is Glycine--tRNA ligase alpha subunit.